We begin with the raw amino-acid sequence, 273 residues long: Ribosomal RNA small subunit methyltransferase A (273 aa).

S-adenosyl-L-methionine contacts are provided by Asn18, Leu20, Gly45, Glu66, Asp91, and Asn113.

The protein belongs to the class I-like SAM-binding methyltransferase superfamily. rRNA adenine N(6)-methyltransferase family. RsmA subfamily.

The protein localises to the cytoplasm. The catalysed reaction is adenosine(1518)/adenosine(1519) in 16S rRNA + 4 S-adenosyl-L-methionine = N(6)-dimethyladenosine(1518)/N(6)-dimethyladenosine(1519) in 16S rRNA + 4 S-adenosyl-L-homocysteine + 4 H(+). In terms of biological role, specifically dimethylates two adjacent adenosines (A1518 and A1519) in the loop of a conserved hairpin near the 3'-end of 16S rRNA in the 30S particle. May play a critical role in biogenesis of 30S subunits. The polypeptide is Ribosomal RNA small subunit methyltransferase A (Salmonella choleraesuis (strain SC-B67)).